The chain runs to 61 residues: Small ribosomal subunit protein uS14 (61 aa).

The Zn(2+) site is built by C24, C27, C40, and C43.

It belongs to the universal ribosomal protein uS14 family. Zinc-binding uS14 subfamily. As to quaternary structure, part of the 30S ribosomal subunit. Contacts proteins S3 and S10. Requires Zn(2+) as cofactor.

Its function is as follows. Binds 16S rRNA, required for the assembly of 30S particles and may also be responsible for determining the conformation of the 16S rRNA at the A site. This chain is Small ribosomal subunit protein uS14, found in Dictyoglomus turgidum (strain DSM 6724 / Z-1310).